Reading from the N-terminus, the 455-residue chain is N(6)-adenosine-methyltransferase non-catalytic subunit METTL14 (455 aa).

Positions Q21–E96 are disordered. Over residues S37–C51 the composition is skewed to basic and acidic residues. The segment covering E69–E82 has biased composition (acidic residues). Interaction with METTL3 regions lie at residues R134 to D135 and S236 to G237. The positively charged region required for RNA-binding stretch occupies residues R244 to R253. Interaction with METTL3 stretches follow at residues R254–D257 and K277–H286. The segment at R296 to R297 is positively charged region required for RNA-binding. The interval N307 to D311 is interaction with METTL3. The interval E392–R455 is disordered. Gly residues predominate over residues R407 to A421. Residues R423–G441 are compositionally biased toward basic and acidic residues.

Belongs to the MT-A70-like family. In terms of assembly, heterodimer; heterodimerizes with mettl3 to form an antiparallel heterodimer that constitutes an active methyltransferase. Component of the WMM complex, a N6-methyltransferase complex composed of a catalytic subcomplex, named MAC, and of an associated subcomplex, named MACOM. The MAC subcomplex is composed of mettl3 and mettl14.

It is found in the nucleus. The METTL3-METTL14 heterodimer forms a N6-methyltransferase complex that methylates adenosine residues at the N(6) position of some mRNAs and regulates the circadian clock, differentiation of embryonic stem cells and cortical neurogenesis. In the heterodimer formed with mettl3, mettl14 constitutes the RNA-binding scaffold that recognizes the substrate rather than the catalytic core. N6-methyladenosine (m6A), which takes place at the 5'-[AG]GAC-3' consensus sites of some mRNAs, plays a role in mRNA stability and processing. The chain is N(6)-adenosine-methyltransferase non-catalytic subunit METTL14 (mettl14) from Danio rerio (Zebrafish).